A 223-amino-acid chain; its full sequence is MSNMNQTIMDAFHFRHATKQFDPQKKVSKEDFETILESGRLSPSSLGLEPWKFVVIQDQALRDELKAHSWGAAKQLDTASHFVLIFARKNVTSRSPYVQHMLRDIKKYEAQTIPAVEQKFDAFQADFHISDNDQALYDWSSKQTYIALGNMMTTAALLGIDSCPMEGFSLDTVTDILANKGILDTEQFGLSVMVAFGYRQQEPPKNKTRQAYEDVIEWVGPKE.

This sequence belongs to the nitroreductase family. The cofactor is FMN.

The protein is Putative NAD(P)H nitroreductase SAUSA300_2462 of Staphylococcus aureus (strain USA300).